The primary structure comprises 119 residues: Holo-[acyl-carrier-protein] synthase (119 aa).

Residues Asp8 and Glu58 each contribute to the Mg(2+) site.

Belongs to the P-Pant transferase superfamily. AcpS family. It depends on Mg(2+) as a cofactor.

The protein resides in the cytoplasm. The catalysed reaction is apo-[ACP] + CoA = holo-[ACP] + adenosine 3',5'-bisphosphate + H(+). In terms of biological role, transfers the 4'-phosphopantetheine moiety from coenzyme A to a Ser of acyl-carrier-protein. The protein is Holo-[acyl-carrier-protein] synthase of Geobacillus sp. (strain WCH70).